Consider the following 273-residue polypeptide: Zinc finger protein 80 (273 aa).

C2H2-type zinc fingers lie at residues 49–71 (YKCK…QQIH) and 77–99 (YECQ…MRIH). The C2H2-type 3; atypical zinc finger occupies 105 to 127 (CKCVECGKVFNRRSHLLCYRQIH). 4 consecutive C2H2-type zinc fingers follow at residues 133 to 155 (YECS…RVTH), 161 to 183 (FGCK…MKIH), 189 to 211 (CKCS…SMTH), and 217 to 239 (YECK…TRSH).

This sequence belongs to the krueppel C2H2-type zinc-finger protein family.

It is found in the nucleus. Functionally, may be involved in transcriptional regulation. The protein is Zinc finger protein 80 (ZNF80) of Homo sapiens (Human).